The sequence spans 397 residues: Phosphoglycerate kinase (397 aa).

Substrate contacts are provided by residues 22–24 (DLN), arginine 37, 60–63 (HFGR), arginine 119, and arginine 152. ATP-binding positions include lysine 202, glutamate 324, and 354–357 (GGDT).

This sequence belongs to the phosphoglycerate kinase family. Monomer.

It is found in the cytoplasm. It catalyses the reaction (2R)-3-phosphoglycerate + ATP = (2R)-3-phospho-glyceroyl phosphate + ADP. Its pathway is carbohydrate degradation; glycolysis; pyruvate from D-glyceraldehyde 3-phosphate: step 2/5. In Rhizorhabdus wittichii (strain DSM 6014 / CCUG 31198 / JCM 15750 / NBRC 105917 / EY 4224 / RW1) (Sphingomonas wittichii), this protein is Phosphoglycerate kinase.